A 170-amino-acid polypeptide reads, in one-letter code: Peptidyl-prolyl cis-trans isomerase-like 3 (170 aa).

Residues 1-160 (MSVTLHTDLG…QEFRIKSVTI (160 aa)) enclose the PPIase cyclophilin-type domain.

It belongs to the cyclophilin-type PPIase family. PPIL3 subfamily.

The enzyme catalyses [protein]-peptidylproline (omega=180) = [protein]-peptidylproline (omega=0). Functionally, PPIases accelerate the folding of proteins. It catalyzes the cis-trans isomerization of proline imidic peptide bonds in oligopeptides. The polypeptide is Peptidyl-prolyl cis-trans isomerase-like 3 (cyp4) (Rhizopus delemar (strain RA 99-880 / ATCC MYA-4621 / FGSC 9543 / NRRL 43880) (Mucormycosis agent)).